The primary structure comprises 397 residues: 1-deoxy-D-xylulose 5-phosphate reductoisomerase (397 aa).

NADPH contacts are provided by Thr10, Gly11, Ser12, Ile13, Gly36, Lys37, Asn38, and Asn124. Residue Lys125 participates in 1-deoxy-D-xylulose 5-phosphate binding. Residue Glu126 coordinates NADPH. Asp150 is a Mn(2+) binding site. Positions 151, 152, 186, and 209 each coordinate 1-deoxy-D-xylulose 5-phosphate. Mn(2+) is bound at residue Glu152. NADPH is bound at residue Gly215. Residues Ser222, Asn227, Lys228, and Glu231 each contribute to the 1-deoxy-D-xylulose 5-phosphate site. Glu231 contacts Mn(2+).

This sequence belongs to the DXR family. Homodimer. Mg(2+) serves as cofactor. The cofactor is Mn(2+).

The catalysed reaction is 2-C-methyl-D-erythritol 4-phosphate + NADP(+) = 1-deoxy-D-xylulose 5-phosphate + NADPH + H(+). It participates in isoprenoid biosynthesis; isopentenyl diphosphate biosynthesis via DXP pathway; isopentenyl diphosphate from 1-deoxy-D-xylulose 5-phosphate: step 1/6. Its function is as follows. Catalyzes the NADPH-dependent rearrangement and reduction of 1-deoxy-D-xylulose-5-phosphate (DXP) to 2-C-methyl-D-erythritol 4-phosphate (MEP). This chain is 1-deoxy-D-xylulose 5-phosphate reductoisomerase, found in Proteus mirabilis (strain HI4320).